Consider the following 180-residue polypeptide: tRNA-splicing endonuclease (180 aa).

Active-site residues include Tyr-117, His-125, and Lys-156.

This sequence belongs to the tRNA-intron endonuclease family. Archaeal short subfamily. As to quaternary structure, homotetramer; although the tetramer contains four active sites, only two participate in the cleavage. Therefore, it should be considered as a dimer of dimers.

It carries out the reaction pretRNA = a 3'-half-tRNA molecule with a 5'-OH end + a 5'-half-tRNA molecule with a 2',3'-cyclic phosphate end + an intron with a 2',3'-cyclic phosphate and a 5'-hydroxyl terminus.. Its function is as follows. Endonuclease that removes tRNA introns. Cleaves pre-tRNA at the 5'- and 3'-splice sites to release the intron. The products are an intron and two tRNA half-molecules bearing 2',3' cyclic phosphate and 5'-OH termini. Recognizes a pseudosymmetric substrate in which 2 bulged loops of 3 bases are separated by a stem of 4 bp. The polypeptide is tRNA-splicing endonuclease (Sulfurisphaera tokodaii (strain DSM 16993 / JCM 10545 / NBRC 100140 / 7) (Sulfolobus tokodaii)).